A 214-amino-acid chain; its full sequence is 3,4-dihydroxy-2-butanone 4-phosphate synthase (214 aa).

D-ribulose 5-phosphate contacts are provided by residues 37–38 (RE), D42, 150–154 (RPGHT), and E174. E38 serves as a coordination point for Mg(2+). H153 lines the Mg(2+) pocket.

This sequence belongs to the DHBP synthase family. As to quaternary structure, homodimer. Requires Mg(2+) as cofactor. Mn(2+) serves as cofactor.

It carries out the reaction D-ribulose 5-phosphate = (2S)-2-hydroxy-3-oxobutyl phosphate + formate + H(+). Its pathway is cofactor biosynthesis; riboflavin biosynthesis; 2-hydroxy-3-oxobutyl phosphate from D-ribulose 5-phosphate: step 1/1. Catalyzes the conversion of D-ribulose 5-phosphate to formate and 3,4-dihydroxy-2-butanone 4-phosphate. This Mannheimia succiniciproducens (strain KCTC 0769BP / MBEL55E) protein is 3,4-dihydroxy-2-butanone 4-phosphate synthase.